A 258-amino-acid polypeptide reads, in one-letter code: Glucose 1-dehydrogenase 2 (258 aa).

11–35 lines the NADP(+) pocket; it reads IVTGSSKGIGKAIAERFGKEKMNVV. Position 146 (Ser146) interacts with substrate. Tyr159 serves as the catalytic Proton acceptor.

The protein belongs to the short-chain dehydrogenases/reductases (SDR) family. Homotetramer.

The catalysed reaction is D-glucose + NAD(+) = D-glucono-1,5-lactone + NADH + H(+). It carries out the reaction D-glucose + NADP(+) = D-glucono-1,5-lactone + NADPH + H(+). This is Glucose 1-dehydrogenase 2 (ycdF) from Bacillus subtilis (strain 168).